We begin with the raw amino-acid sequence, 845 residues long: Leucine--tRNA ligase (845 aa).

The short motif at 40–51 (PYPSGAGLHVGH) is the 'HIGH' region element. Positions 623 to 627 (KMSKS) match the 'KMSKS' region motif. Lysine 626 contacts ATP.

The protein belongs to the class-I aminoacyl-tRNA synthetase family.

It localises to the cytoplasm. It catalyses the reaction tRNA(Leu) + L-leucine + ATP = L-leucyl-tRNA(Leu) + AMP + diphosphate. This is Leucine--tRNA ligase from Protochlamydia amoebophila (strain UWE25).